A 466-amino-acid chain; its full sequence is MTPSALKKTVLLLGTAFAAASVHASGYHFGTQSVNAQSTANAAAAEAADASTIFYNPAGLTKLDSSQISVNANIVLPSIHYEADSATDFTGLPVQGSKSGKITKTTVAPHIYGAYKVNDNLTVGLGVYVPFGSATEYEKDSVLRHNINKLGLTSIAVEPVAAWKLNDRHSFGAGIIAQHTSAELRKYADWGIKSKAEILTAKPPKPNGVAEAAKIQADGHADVKGSDWGFGYQLAWMWDINDRARVGVNYRSKVSHTLKGDAEWAADGAAAKAMWSTMLAANGYTANEKARVKIVTPESLSVHGMYKVSDKADLFGDVTWTRHSRFDKAELVFEKEKTVVKGKSDRTTITPNWRNTYKVGFGGSYQISEPLQLRAGIAFDKSPVRNADYRMNSLPDGNRIWFSAGMKYHIGKNHVVDAAYTHIHINDTSYRTAKASGNDVDSKGASSARFKNHADIIGLQYTYKFK.

The N-terminal stretch at 1-24 (MTPSALKKTVLLLGTAFAAASVHA) is a signal peptide.

Belongs to the OmpP1/FadL family.

The protein localises to the cell outer membrane. This Neisseria meningitidis serogroup B (strain ATCC BAA-335 / MC58) protein is Putative outer membrane protein NMB0088.